A 173-amino-acid chain; its full sequence is Mesencephalic astrocyte-derived neurotrophic factor homolog (173 aa).

An N-terminal signal peptide occupies residues 1–22; sequence MKTAHLVVVVCFLAGALQTAVA. 4 disulfides stabilise this stretch: C28–C114, C31–C103, C61–C72, and C148–C151.

The protein belongs to the ARMET family.

It localises to the secreted. Its function is as follows. Required during the maturation of the embryonic nervous system for maintenance of neuronal and cuticular connectivity. Essential for maintenance of dopaminergic neurons and dopamine levels. The protein is Mesencephalic astrocyte-derived neurotrophic factor homolog of Drosophila ananassae (Fruit fly).